Here is a 1406-residue protein sequence, read N- to C-terminus: DNA topoisomerase 2 (1406 aa).

ATP-binding positions include N69, N98, 126-128 (SSN), and 139-146 (GRNGYGAK). The segment at 332–334 (KKK) is interaction with DNA. 363 to 365 (QTK) contacts ATP. The Toprim domain occupies 441 to 555 (CTLILTEGDS…GLLDIPGFLI (115 aa)). Mg(2+)-binding residues include E447, D524, and D526. Residues 690 to 1159 (IPSVLDGFKP…SAKDLWNNDL (470 aa)) form the Topo IIA-type catalytic domain. The O-(5'-phospho-DNA)-tyrosine intermediate role is filled by Y780. The interaction with DNA stretch occupies residues 963 to 972 (KLISPISLQN). The span at 1079–1089 (EDEDEDLEESE) shows a compositional bias: acidic residues. Disordered regions lie at residues 1079 to 1106 (EDED…VNGP), 1183 to 1215 (KTKG…KKIK), 1230 to 1287 (KIKA…DESG), and 1303 to 1406 (DEDA…FNDE). Over residues 1090 to 1100 (EATRKKDKDDE) the composition is skewed to basic and acidic residues. Over residues 1204–1214 (KKKPARRIKKI) the composition is skewed to basic residues. Residues 1261–1274 (DVTSNASTPSTTIF) are compositionally biased toward polar residues. Positions 1326 to 1336 (AKKKAPPKRKA) are enriched in basic residues. 2 stretches are compositionally biased toward acidic residues: residues 1341 to 1359 (SSED…DEEV) and 1381 to 1406 (EISD…FNDE).

This sequence belongs to the type II topoisomerase family. In terms of assembly, homodimer. Requires Mg(2+) as cofactor. The cofactor is Mn(2+). Ca(2+) is required as a cofactor.

It localises to the nucleus. The enzyme catalyses ATP-dependent breakage, passage and rejoining of double-stranded DNA.. Control of topological states of DNA by transient breakage and subsequent rejoining of DNA strands. Topoisomerase II makes double-strand breaks. In Candida glabrata (strain ATCC 2001 / BCRC 20586 / JCM 3761 / NBRC 0622 / NRRL Y-65 / CBS 138) (Yeast), this protein is DNA topoisomerase 2 (TOP2).